Consider the following 326-residue polypeptide: Beta-ketoacyl-[acyl-carrier-protein] synthase III (326 aa).

Catalysis depends on residues Cys-120 and His-253. The interval 254–258 is ACP-binding; sequence QANIR. Asn-283 is a catalytic residue.

It belongs to the thiolase-like superfamily. FabH family. As to quaternary structure, homodimer.

The protein localises to the cytoplasm. The enzyme catalyses malonyl-[ACP] + acetyl-CoA + H(+) = 3-oxobutanoyl-[ACP] + CO2 + CoA. It functions in the pathway lipid metabolism; fatty acid biosynthesis. In terms of biological role, catalyzes the condensation reaction of fatty acid synthesis by the addition to an acyl acceptor of two carbons from malonyl-ACP. Catalyzes the first condensation reaction which initiates fatty acid synthesis and may therefore play a role in governing the total rate of fatty acid production. Possesses both acetoacetyl-ACP synthase and acetyl transacylase activities. Its substrate specificity determines the biosynthesis of branched-chain and/or straight-chain of fatty acids. The polypeptide is Beta-ketoacyl-[acyl-carrier-protein] synthase III (Cupriavidus necator (strain ATCC 17699 / DSM 428 / KCTC 22496 / NCIMB 10442 / H16 / Stanier 337) (Ralstonia eutropha)).